Consider the following 324-residue polypeptide: Ribosomal RNA small subunit methyltransferase H (324 aa).

Residues Ala40–His42, Asp60, Leu94, Asp108, and His115 contribute to the S-adenosyl-L-methionine site. The interval Glu301–Gly324 is disordered. The span at Arg315 to Gly324 shows a compositional bias: basic and acidic residues.

This sequence belongs to the methyltransferase superfamily. RsmH family.

It is found in the cytoplasm. The enzyme catalyses cytidine(1402) in 16S rRNA + S-adenosyl-L-methionine = N(4)-methylcytidine(1402) in 16S rRNA + S-adenosyl-L-homocysteine + H(+). Specifically methylates the N4 position of cytidine in position 1402 (C1402) of 16S rRNA. The sequence is that of Ribosomal RNA small subunit methyltransferase H from Maridesulfovibrio salexigens (strain ATCC 14822 / DSM 2638 / NCIMB 8403 / VKM B-1763) (Desulfovibrio salexigens).